A 342-amino-acid chain; its full sequence is Phosphate acyltransferase (342 aa).

This sequence belongs to the PlsX family. Homodimer. Probably interacts with PlsY.

Its subcellular location is the cytoplasm. It catalyses the reaction a fatty acyl-[ACP] + phosphate = an acyl phosphate + holo-[ACP]. The protein operates within lipid metabolism; phospholipid metabolism. In terms of biological role, catalyzes the reversible formation of acyl-phosphate (acyl-PO(4)) from acyl-[acyl-carrier-protein] (acyl-ACP). This enzyme utilizes acyl-ACP as fatty acyl donor, but not acyl-CoA. The protein is Phosphate acyltransferase of Alkalilimnicola ehrlichii (strain ATCC BAA-1101 / DSM 17681 / MLHE-1).